A 257-amino-acid polypeptide reads, in one-letter code: Pyridoxine 5'-phosphate synthase (257 aa).

3-amino-2-oxopropyl phosphate is bound at residue Asn6. Position 8–9 (8–9 (DH)) interacts with 1-deoxy-D-xylulose 5-phosphate. Residue Arg17 coordinates 3-amino-2-oxopropyl phosphate. The active-site Proton acceptor is His41. Arg43 and His48 together coordinate 1-deoxy-D-xylulose 5-phosphate. The active-site Proton acceptor is Glu68. Thr98 is a 1-deoxy-D-xylulose 5-phosphate binding site. His210 (proton donor) is an active-site residue. Residues Gly211 and 232–233 (GQ) each bind 3-amino-2-oxopropyl phosphate.

It belongs to the PNP synthase family. Homooctamer; tetramer of dimers.

It is found in the cytoplasm. The enzyme catalyses 3-amino-2-oxopropyl phosphate + 1-deoxy-D-xylulose 5-phosphate = pyridoxine 5'-phosphate + phosphate + 2 H2O + H(+). It functions in the pathway cofactor biosynthesis; pyridoxine 5'-phosphate biosynthesis; pyridoxine 5'-phosphate from D-erythrose 4-phosphate: step 5/5. Functionally, catalyzes the complicated ring closure reaction between the two acyclic compounds 1-deoxy-D-xylulose-5-phosphate (DXP) and 3-amino-2-oxopropyl phosphate (1-amino-acetone-3-phosphate or AAP) to form pyridoxine 5'-phosphate (PNP) and inorganic phosphate. The polypeptide is Pyridoxine 5'-phosphate synthase (Campylobacter jejuni (strain RM1221)).